Here is a 361-residue protein sequence, read N- to C-terminus: Chorismate synthase (361 aa).

Residues Arg48 and Arg54 each coordinate NADP(+). Residues 131-133 (RSS), 243-244 (NA), Gly287, 302-306 (KPTSS), and Arg328 contribute to the FMN site.

Belongs to the chorismate synthase family. As to quaternary structure, homotetramer. Requires FMNH2 as cofactor.

The catalysed reaction is 5-O-(1-carboxyvinyl)-3-phosphoshikimate = chorismate + phosphate. The protein operates within metabolic intermediate biosynthesis; chorismate biosynthesis; chorismate from D-erythrose 4-phosphate and phosphoenolpyruvate: step 7/7. Its function is as follows. Catalyzes the anti-1,4-elimination of the C-3 phosphate and the C-6 proR hydrogen from 5-enolpyruvylshikimate-3-phosphate (EPSP) to yield chorismate, which is the branch point compound that serves as the starting substrate for the three terminal pathways of aromatic amino acid biosynthesis. This reaction introduces a second double bond into the aromatic ring system. The sequence is that of Chorismate synthase from Rhodopseudomonas palustris (strain BisB5).